Here is a 169-residue protein sequence, read N- to C-terminus: Allophycocyanin subunit beta-18 (169 aa).

N72 carries the post-translational modification N4-methylasparagine. C82 lines the (2R,3E)-phycocyanobilin pocket.

This sequence belongs to the phycobiliprotein family. As to quaternary structure, heterodimer of ApcE and this beta chain. Post-translationally, contains one covalently linked bilin chromophore. The chromophore is added by phycocyanobilin lyase CpcUS.

It localises to the cellular thylakoid membrane. Its function is as follows. A variant beta-allophycocyanin (AP) which forms a complex with ApcE, a phycobilisome terminal emitter that influences energy transfer to photosystem II. This is Allophycocyanin subunit beta-18 (apcF) from Picosynechococcus sp. (strain ATCC 27264 / PCC 7002 / PR-6) (Agmenellum quadruplicatum).